A 488-amino-acid chain; its full sequence is Prostaglandin E2 receptor EP4 subtype (488 aa).

At 1–19 (MSTPGVNSSASLSPDRLNS) the chain is on the extracellular side. A glycan (N-linked (GlcNAc...) asparagine) is linked at N7. A helical transmembrane segment spans residues 20–43 (PVTIPAVMFIFGVVGNLVAIVVLC). The Cytoplasmic portion of the chain corresponds to 44-55 (KSRKEQKETTFY). A helical transmembrane segment spans residues 56 to 79 (TLVCGLAVTDLLGTLLVSPVTIAT). The Extracellular portion of the chain corresponds to 80 to 96 (YMKGQWPGGQPLCEYST). A disulfide bridge connects residues C92 and C170. Residues 97–115 (FILLFFSLSGLSIICAMSV) traverse the membrane as a helical segment. At 116–135 (ERYLAINHAYFYSHYVDKRL) the chain is on the cytoplasmic side. A helical membrane pass occupies residues 136–160 (AGLTLFAVYASNVLFCALPNMGLGS). Topologically, residues 161–184 (SRLQYPDTWCFIDWTTNVTAHAAY) are extracellular. A helical transmembrane segment spans residues 185–211 (SYMYAGFSSFLILATVLCNVLVCGALL). The Cytoplasmic segment spans residues 212 to 267 (RMHRQFMRRTSLGTEQHHAAAAASVASRGHPAASPALPRLSDFRRRRSFRRIAGAE). The chain crosses the membrane as a helical span at residues 268–295 (IQMVILLIATSLVVLICSIPLVVRVFVN). The Extracellular segment spans residues 296-312 (QLYQPSLEREVSKNPDL). A helical transmembrane segment spans residues 313-332 (QAIRIASVNPILDPWIYILL). The Cytoplasmic segment spans residues 333–488 (RKTVLSKAIE…ETLNLSEKCI (156 aa)). The interval 356-376 (RERSGQHCSDSQRTSSAMSGH) is disordered. The span at 361-376 (QHCSDSQRTSSAMSGH) shows a compositional bias: polar residues. Phosphoserine occurs at positions 374, 377, 379, and 382. The segment covering 437–449 (SETSDSSQGQDSE) has biased composition (polar residues). Residues 437 to 475 (SETSDSSQGQDSESVLLVDEAGGSGRAGPAPKGSSLQVT) are disordered.

Belongs to the G-protein coupled receptor 1 family. In terms of assembly, interacts with FEM1A. Phosphorylation mediates agonist-mediated desensitization by promoting cytoplasmic retention. High in intestine and in peripheral blood mononuclear cells; low in lung, kidney, thymus, uterus, vasculature and brain. Not found in liver, heart, retina oe skeletal muscle.

Its subcellular location is the cell membrane. Functionally, receptor for prostaglandin E2 (PGE2). The activity of this receptor is mediated by G(s) proteins that stimulate adenylate cyclase. Has a relaxing effect on smooth muscle. May play an important role in regulating renal hemodynamics, intestinal epithelial transport, adrenal aldosterone secretion, and uterine function. In Homo sapiens (Human), this protein is Prostaglandin E2 receptor EP4 subtype (PTGER4).